A 202-amino-acid chain; its full sequence is Recombination protein RecR (202 aa).

The C4-type zinc-finger motif lies at 61 to 76 (CARCNSFTEDEVCATC). The 96-residue stretch at 84–179 (GLLCIVETPA…KVTRLARGVP (96 aa)) folds into the Toprim domain.

It belongs to the RecR family.

Functionally, may play a role in DNA repair. It seems to be involved in an RecBC-independent recombinational process of DNA repair. It may act with RecF and RecO. The protein is Recombination protein RecR of Bordetella bronchiseptica (strain ATCC BAA-588 / NCTC 13252 / RB50) (Alcaligenes bronchisepticus).